We begin with the raw amino-acid sequence, 419 residues long: DNA ligase (419 aa).

Positions 1 to 120 (MLNQFPGQLS…ARQKRGAHTN (120 aa)) are NTD. An AD domain region spans residues 121 to 317 (RGMIPPMLVK…NYHSPHLAKL (197 aa)). The active-site N6-AMP-lysine intermediate is K151. The interval 318–419 (KPLLDAEFIL…REPINVLEII (102 aa)) is OB domain.

The protein belongs to the ATP-dependent DNA ligase family.

It localises to the virion. It catalyses the reaction ATP + (deoxyribonucleotide)n-3'-hydroxyl + 5'-phospho-(deoxyribonucleotide)m = (deoxyribonucleotide)n+m + AMP + diphosphate.. In terms of biological role, very low-fidelity DNA ligase that seals nicks in double-stranded DNA during DNA repair. Together with the viral repair DNA polymerase X, fills the single nucleotide gaps generated by the AP endonuclease. It is not essential for viral replication and recombination. Displays a very low adenylation activity towards DNA with 3'-dideoxy- or 3'-amino-terminated nicks compared to regular nick DNA. The chain is DNA ligase from Ornithodoros (relapsing fever ticks).